A 90-amino-acid polypeptide reads, in one-letter code: uncharacterized protein (90 aa).

A helical membrane pass occupies residues V12 to F32.

The protein resides in the membrane. This is an uncharacterized protein from Mycoplasma pneumoniae (strain ATCC 29342 / M129 / Subtype 1) (Mycoplasmoides pneumoniae).